Reading from the N-terminus, the 219-residue chain is tRNA (guanine-N(7)-)-methyltransferase (219 aa).

Glutamate 44, aspartate 69, glutamate 102, and asparagine 125 together coordinate S-adenosyl-L-methionine. 2 residues coordinate substrate: lysine 129 and aspartate 161.

Belongs to the class I-like SAM-binding methyltransferase superfamily. TrmB family.

The catalysed reaction is guanosine(46) in tRNA + S-adenosyl-L-methionine = N(7)-methylguanosine(46) in tRNA + S-adenosyl-L-homocysteine. It participates in tRNA modification; N(7)-methylguanine-tRNA biosynthesis. Its function is as follows. Catalyzes the formation of N(7)-methylguanine at position 46 (m7G46) in tRNA. The protein is tRNA (guanine-N(7)-)-methyltransferase of Clostridium perfringens (strain 13 / Type A).